A 66-amino-acid chain; its full sequence is UPF0337 protein BT9727_0908 (66 aa).

The segment at 1 to 22 (MSENGLKEQITGKVEKTKGQVK) is disordered. The span at 13-22 (KVEKTKGQVK) shows a compositional bias: basic and acidic residues.

It belongs to the UPF0337 (CsbD) family.

This Bacillus thuringiensis subsp. konkukian (strain 97-27) protein is UPF0337 protein BT9727_0908.